A 1132-amino-acid polypeptide reads, in one-letter code: Phytochrome B (1132 aa).

The segment covering 1–11 (MASGSRTKHSH) has biased composition (basic residues). Residues 1 to 27 (MASGSRTKHSHQSGQGQVQAQSSGTSN) form a disordered region. Residues 12–26 (QSGQGQVQAQSSGTS) show a composition bias toward low complexity. A GAF domain is found at 231-409 (DVKLLCDTVV…AFGLQLNMEL (179 aa)). Cysteine 336 lines the phytochromobilin pocket. 2 PAS domains span residues 623 to 694 (VARE…LRGE) and 757 to 828 (DYKA…MIVL). The region spanning 905–1125 (YLCQEIKSPL…LIILDLPMTR (221 aa)) is the Histidine kinase domain.

The protein belongs to the phytochrome family. Homodimer. Post-translationally, contains one covalently linked phytochromobilin chromophore.

Functionally, regulatory photoreceptor which exists in two forms that are reversibly interconvertible by light: the Pr form that absorbs maximally in the red region of the spectrum and the Pfr form that absorbs maximally in the far-red region. Photoconversion of Pr to Pfr induces an array of morphogenic responses, whereas reconversion of Pfr to Pr cancels the induction of those responses. Pfr controls the expression of a number of nuclear genes including those encoding the small subunit of ribulose-bisphosphate carboxylase, chlorophyll A/B binding protein, protochlorophyllide reductase, rRNA, etc. It also controls the expression of its own gene(s) in a negative feedback fashion. The chain is Phytochrome B (PHYB) from Nicotiana tabacum (Common tobacco).